Consider the following 118-residue polypeptide: Large ribosomal subunit protein uL18 (118 aa).

The protein belongs to the universal ribosomal protein uL18 family. Part of the 50S ribosomal subunit; part of the 5S rRNA/L5/L18/L25 subcomplex. Contacts the 5S and 23S rRNAs.

In terms of biological role, this is one of the proteins that bind and probably mediate the attachment of the 5S RNA into the large ribosomal subunit, where it forms part of the central protuberance. The sequence is that of Large ribosomal subunit protein uL18 from Caulobacter sp. (strain K31).